A 101-amino-acid chain; its full sequence is Integration host factor subunit alpha (101 aa).

The protein belongs to the bacterial histone-like protein family. As to quaternary structure, heterodimer of an alpha and a beta chain.

Functionally, this protein is one of the two subunits of integration host factor, a specific DNA-binding protein that functions in genetic recombination as well as in transcriptional and translational control. The protein is Integration host factor subunit alpha of Maricaulis maris (strain MCS10) (Caulobacter maris).